The chain runs to 264 residues: S-adenosylmethionine decarboxylase proenzyme (264 aa).

Residue S113 is the Schiff-base intermediate with substrate; via pyruvic acid of the active site. S113 carries the pyruvic acid (Ser); by autocatalysis modification. H118 (proton acceptor; for processing activity) is an active-site residue. The Proton donor; for catalytic activity role is filled by C141.

It belongs to the prokaryotic AdoMetDC family. Type 2 subfamily. As to quaternary structure, heterooctamer of four alpha and four beta chains arranged as a tetramer of alpha/beta heterodimers. Requires pyruvate as cofactor. In terms of processing, is synthesized initially as an inactive proenzyme. Formation of the active enzyme involves a self-maturation process in which the active site pyruvoyl group is generated from an internal serine residue via an autocatalytic post-translational modification. Two non-identical subunits are generated from the proenzyme in this reaction, and the pyruvate is formed at the N-terminus of the alpha chain, which is derived from the carboxyl end of the proenzyme. The post-translation cleavage follows an unusual pathway, termed non-hydrolytic serinolysis, in which the side chain hydroxyl group of the serine supplies its oxygen atom to form the C-terminus of the beta chain, while the remainder of the serine residue undergoes an oxidative deamination to produce ammonia and the pyruvoyl group blocking the N-terminus of the alpha chain.

The enzyme catalyses S-adenosyl-L-methionine + H(+) = S-adenosyl 3-(methylsulfanyl)propylamine + CO2. It participates in amine and polyamine biosynthesis; S-adenosylmethioninamine biosynthesis; S-adenosylmethioninamine from S-adenosyl-L-methionine: step 1/1. Catalyzes the decarboxylation of S-adenosylmethionine to S-adenosylmethioninamine (dcAdoMet), the propylamine donor required for the synthesis of the polyamines spermine and spermidine from the diamine putrescine. This Stenotrophomonas maltophilia (strain K279a) protein is S-adenosylmethionine decarboxylase proenzyme.